The sequence spans 309 residues: SUR7 family protein FMP45 (309 aa).

Residues 1–5 (MIFKR) lie on the Cytoplasmic side of the membrane. A helical membrane pass occupies residues 6-26 (FVNLLVFLFLLGAGLLTFFLI). Residues 27-116 (LSGGRESGTL…YYLSRVGWAM (90 aa)) are Extracellular-facing. N-linked (GlcNAc...) asparagine glycosylation occurs at N73. Residues 117-137 (LLISLFFIVLALVPGFLATFL) form a helical membrane-spanning segment. At 138-140 (PFK) the chain is on the cytoplasmic side. A helical transmembrane segment spans residues 141–161 (AVPVLYCVLSWLAFFFIILAA). Residues 162–188 (CLYTGCYVKARKTFRNSGRSARLGPKN) lie on the Extracellular side of the membrane. The chain crosses the membrane as a helical span at residues 189–209 (FAFIWTSVFLMLVNAIWSTIF). Over 210–309 (SATHKAHSTY…GLAGPVTVRD (100 aa)) the chain is Cytoplasmic. Phosphoserine occurs at positions 230 and 232. T235 is subject to Phosphothreonine. The interval 253-309 (GPITAAPVVGQPQPTTTTTPAGNGKFFQKLKTRKQVPSAELEPAGDGGLAGPVTVRD) is disordered. Residues 258–274 (APVVGQPQPTTTTTPAG) are compositionally biased toward low complexity.

Belongs to the SUR7 family.

It is found in the cell membrane. Involved in sporulation and affects the sphingolipid composition of the plasma membrane. The protein is SUR7 family protein FMP45 (FMP45) of Saccharomyces cerevisiae (strain ATCC 204508 / S288c) (Baker's yeast).